The primary structure comprises 557 residues: Tripeptidyl-peptidase 1 (557 aa).

A signal peptide spans 1 to 16 (MRVAVFVLSFIWLVNG). A propeptide spans 17 to 190 (ELLEADQDAV…WEGARQAILG (174 aa)) (removed in mature form). Residue asparagine 53 is glycosylated (N-linked (GlcNAc...) asparagine). Residues cysteine 107 and cysteine 118 are joined by a disulfide bond. The Peptidase S53 domain occupies 194–557 (GVTPAVIRNR…YPVFLASLMD (364 aa)). Asparagine 205 and asparagine 216 each carry an N-linked (GlcNAc...) asparagine glycan. Catalysis depends on charge relay system residues glutamate 266 and aspartate 270. N-linked (GlcNAc...) asparagine glycans are attached at residues asparagine 280, asparagine 307, and asparagine 438. Cystine bridges form between cysteine 359-cysteine 521 and cysteine 517-cysteine 532. Serine 470 functions as the Charge relay system in the catalytic mechanism. Ca(2+)-binding residues include aspartate 512 and valine 513. Aspartate 538 serves as a coordination point for Ca(2+).

Ca(2+) is required as a cofactor. Activated by autocatalytic proteolytical processing.

It localises to the lysosome. The catalysed reaction is Release of an N-terminal tripeptide from a polypeptide, but also has endopeptidase activity.. In terms of biological role, lysosomal serine protease with tripeptidyl-peptidase I activity. May act as a non-specific lysosomal peptidase which generates tripeptides from the breakdown products produced by lysosomal proteinases. Requires substrates with an unsubstituted N-terminus. The protein is Tripeptidyl-peptidase 1 of Danio rerio (Zebrafish).